The sequence spans 91 residues: Cell division topological specificity factor (91 aa).

The protein belongs to the MinE family.

Prevents the cell division inhibition by proteins MinC and MinD at internal division sites while permitting inhibition at polar sites. This ensures cell division at the proper site by restricting the formation of a division septum at the midpoint of the long axis of the cell. In Lachnospira eligens (strain ATCC 27750 / DSM 3376 / VPI C15-48 / C15-B4) (Eubacterium eligens), this protein is Cell division topological specificity factor.